The primary structure comprises 218 residues: Tegument protein UL51 homolog (218 aa).

A lipid anchor (S-palmitoyl cysteine; by host) is attached at Cys11. The segment at 199 to 218 (APPPVVRQPEHSGPTELALT) is disordered.

This sequence belongs to the herpesviridae UL51 family. Homodimer. Interacts with BBRF2; the BBRF2-BSRF1 complexes oligomerize which might play a role in tethering the viral nucleocapsids to the host Golgi membrane during secondary envelopment. Interacts with BGLF3.5. Interacts with BALF1. Interacts with glycoprotein gB. Interacts with glycoprotein heterodimer gH/gL. Post-translationally, phosphorylated. In terms of processing, palmitoylation is necessary for Golgi localization.

The protein resides in the host cytoplasm. It is found in the virion. It localises to the host Golgi apparatus. In terms of biological role, plays several roles during the time course of infection, including egress of virus particles from the perinuclear space and secondary envelopment of cytoplasmic capsids that bud into specific trans-Golgi network (TGN)-derived membranes. The sequence is that of Tegument protein UL51 homolog from Homo sapiens (Human).